The chain runs to 206 residues: GTP-binding protein YPT1 (206 aa).

At M1 the chain carries N-acetylmethionine. Residues S17–C23, Y33–T40, G66, and N121–D124 contribute to the GTP site. C23 carries the S-palmitoyl cysteine lipid modification. Positions Y37–F45 match the Effector region motif. The interaction with GDI1 stretch occupies residues D63–G80. C123 is lipidated: S-palmitoyl cysteine. K144 is covalently cross-linked (Glycyl lysine isopeptide (Lys-Gly) (interchain with G-Cter in ubiquitin)). A152–L153 serves as a coordination point for GTP. S172 and S174 each carry phosphoserine. The segment at M173–C206 is disordered. Residues G189–G195 are interaction with GDI1. Residues C205 and C206 are each lipidated (S-geranylgeranyl cysteine).

This sequence belongs to the small GTPase superfamily. Rab family. In terms of assembly, forms a complex with the Rab escort protein (REP) MRS6, which is recognized by Rab geranylgeranyltransferase BET2-BET4. Interacts with the Rab GDP dissociation inhibitor GDI1, which can retrieve from and deliver to membranes the GDP-bound and prenylated form of YPT1. Interacts with YIP1, which is required for proper membrane targeting of prenylated YPT1. Interacts with YIF1, YIP3, YIP4 and YIP5. Prenylation is required for interaction with GDI1 and YIP1.

Its subcellular location is the endoplasmic reticulum membrane. The protein localises to the golgi apparatus membrane. It localises to the cytoplasm. The protein resides in the preautophagosomal structure membrane. With respect to regulation, rab activation is generally mediated by a guanine exchange factor (GEF), while inactivation through hydrolysis of bound GTP is catalyzed by a GTPase activating protein (GAP). YPT1 is activated by the GEFs DSS4 and TRAPP complex, and inactivated by GAPs GYP1, GYP5 and GYP8. Its function is as follows. The small GTPases Rab are key regulators of intracellular membrane trafficking, from the formation of transport vesicles to their fusion with membranes. Rabs cycle between an inactive GDP-bound form and an active GTP-bound form that is able to recruit to membranes different set of downstream effectors directly responsible for vesicle formation, movement, tethering and fusion. YPT1 regulates the trafficking of secretory vesicles from the endoplasmic reticulum (ER) to the Golgi. Vesicular transport depends on shuttling of YPT1 between membrane and cytosol by GDI1, probably by recycling it to its membrane of origin after a vesicle fusion event. Plays a role in the initial events of the autophagic vacuole development which take place at specialized regions of the endoplasmic reticulum. Also involved in the recycling of membrane proteins. This chain is GTP-binding protein YPT1 (YPT1), found in Saccharomyces cerevisiae (strain ATCC 204508 / S288c) (Baker's yeast).